The chain runs to 277 residues: UPF0276 protein PP_0992 (277 aa).

Belongs to the UPF0276 family.

The polypeptide is UPF0276 protein PP_0992 (Pseudomonas putida (strain ATCC 47054 / DSM 6125 / CFBP 8728 / NCIMB 11950 / KT2440)).